The sequence spans 275 residues: Malonyl-[acyl-carrier protein] O-methyltransferase (275 aa).

Belongs to the methyltransferase superfamily.

It catalyses the reaction malonyl-[ACP] + S-adenosyl-L-methionine = malonyl-[ACP] methyl ester + S-adenosyl-L-homocysteine. The protein operates within cofactor biosynthesis; biotin biosynthesis. Its function is as follows. Converts the free carboxyl group of a malonyl-thioester to its methyl ester by transfer of a methyl group from S-adenosyl-L-methionine (SAM). It allows to synthesize pimeloyl-ACP via the fatty acid synthetic pathway. The polypeptide is Malonyl-[acyl-carrier protein] O-methyltransferase (Methylococcus capsulatus (strain ATCC 33009 / NCIMB 11132 / Bath)).